The following is a 346-amino-acid chain: Enkurin domain-containing protein 1 (346 aa).

Disordered regions lie at residues 1 to 24 (MCEG…DYYR), 88 to 107 (SGVS…NLRR), and 113 to 132 (RRFQ…PLKA). Phosphoserine is present on Ser91. 2 stretches are compositionally biased toward basic and acidic residues: residues 98–107 (KDHEKENLRR) and 113–125 (RRFQ…REQG). At Ser136 the chain carries Phosphoserine. The 93-residue stretch at 251–343 (ERRDLWRKEA…IFSRPKVFVK (93 aa)) folds into the Enkurin domain. Residues 259 to 280 (EAEARQRSQPDPSMPPGHTLMP) form a disordered region.

In terms of assembly, interacts with alpha-tubulin. Interacts (via central region) with CCP110 (via N-terminal region); competes with CEP97 for binding to CCP110. Widely expressed with highest levels in testis and lung.

The protein localises to the cytoplasm. It is found in the cytoskeleton. It localises to the microtubule organizing center. The protein resides in the centrosome. Its subcellular location is the centriole. The protein localises to the cilium basal body. It is found in the cell projection. It localises to the cilium. The protein resides in the spindle. Its subcellular location is the spindle pole. The protein localises to the cilium axoneme. Its function is as follows. Microtubule-binding protein which regulates microtubule organization and stability. Promotes the stability of astral microtubules and facilitates the proper orientation of the mitotic spindle. This allows the oriented division of basal keratinocytes and contributes to epidermal stratification. Required for the assembly of both primary and motile cilia. Destabilizes the interaction between CCP110 and CEP97 by competing with CEP97 for binding to CCP110 which promotes the removal of CCP110 and CEP97 from the mother centriole and allows the initiation of ciliogenesis. The chain is Enkurin domain-containing protein 1 (Enkd1) from Mus musculus (Mouse).